The sequence spans 143 residues: UPF0201 protein PAE1632 (143 aa).

Belongs to the UPF0201 family.

The chain is UPF0201 protein PAE1632 from Pyrobaculum aerophilum (strain ATCC 51768 / DSM 7523 / JCM 9630 / CIP 104966 / NBRC 100827 / IM2).